The sequence spans 427 residues: Acetylornithine aminotransferase, mitochondrial (427 aa).

The residue at position 279 (lysine 279) is an N6-(pyridoxal phosphate)lysine.

The protein belongs to the class-III pyridoxal-phosphate-dependent aminotransferase family. Requires pyridoxal 5'-phosphate as cofactor.

It localises to the mitochondrion matrix. The catalysed reaction is N(2)-acetyl-L-ornithine + 2-oxoglutarate = N-acetyl-L-glutamate 5-semialdehyde + L-glutamate. The protein operates within amino-acid biosynthesis; L-arginine biosynthesis; N(2)-acetyl-L-ornithine from L-glutamate: step 4/4. In Candida glabrata (strain ATCC 2001 / BCRC 20586 / JCM 3761 / NBRC 0622 / NRRL Y-65 / CBS 138) (Yeast), this protein is Acetylornithine aminotransferase, mitochondrial (ARG8).